Consider the following 501-residue polypeptide: UPF0616 protein C1687.04 (501 aa).

The protein belongs to the UPF0616 family.

Its subcellular location is the cytoplasm. The protein resides in the nucleus. This is UPF0616 protein C1687.04 from Schizosaccharomyces pombe (strain 972 / ATCC 24843) (Fission yeast).